A 539-amino-acid chain; its full sequence is Sodium/hydrogen exchanger 9B2 (539 aa).

Residues 1 to 94 lie on the Cytoplasmic side of the membrane; it reads MEDSLFSVDK…ACPPQGCFSL (94 aa). A helical membrane pass occupies residues 95–112; sequence AITNVTMVILIWAVVWSI. Topologically, residues 113–121 are extracellular; it reads TGPECLPGG. Residues 122–141 form a helical membrane-spanning segment; sequence NLFGILALLFSAALGGKLIS. Topologically, residues 142-152 are cytoplasmic; the sequence is LIKIPSLPPLP. Residues 153–169 traverse the membrane as a helical segment; sequence PLLGMLLAGFLIRNIPV. Residues 170–179 lie on the Extracellular side of the membrane; it reads ITDQVQIHHK. A helical membrane pass occupies residues 180–197; sequence WSAALRNIALAIILVRAG. Residues 198 to 208 lie on the Cytoplasmic side of the membrane; the sequence is LGLDPKALRKL. A helical transmembrane segment spans residues 209-235; that stretch reads KAVCLRLSFGPCVVESCTAAVVSHFIM. Over 236 to 241 the chain is Extracellular; that stretch reads GFPLTW. The chain crosses the membrane as a helical span at residues 242 to 250; it reads GFMLGFVLG. Residues 251 to 278 lie on the Cytoplasmic side of the membrane; sequence AVSPAVVVPSMLILQKEGFGVDKGIPTL. Na(+) contacts are provided by Val-252, Gly-283, Asp-286, and Asp-287. The helical transmembrane segment at 279–298 threads the bilayer; it reads LMAAGSFDDVLAITGFNTCL. Over 299-308 the chain is Extracellular; the sequence is GMAFSSGSTL. Residues 309 to 332 form a helical membrane-spanning segment; the sequence is NTIVRGVLEVVVGIAAGLLFGFFL. Residues 333–347 lie on the Cytoplasmic side of the membrane; that stretch reads HYFPSKDQENLKGKR. Residues 348-365 traverse the membrane as a helical segment; that stretch reads SYLILALSVFAVFGSLYF. Residues 366–369 are Extracellular-facing; it reads GFPG. Residues 370 to 381 form a helical membrane-spanning segment; that stretch reads SGGLCTLVMAFL. Residues 382–398 lie on the Cytoplasmic side of the membrane; it reads AGIGWSTDKTVVEDIIA. The helical transmembrane segment at 399 to 419 threads the bilayer; the sequence is VSWDIFQPLLFGLIGAEISVA. At 420–425 the chain is on the extracellular side; that stretch reads SLKPET. A helical transmembrane segment spans residues 426–448; it reads VGLCTATLIIALIIRICISFLMV. The Cytoplasmic segment spans residues 449-469; sequence CFSGFSLKEKIFISLAWMPKA. A helical transmembrane segment spans residues 470-481; sequence TVQAAIGSVALD. Over 482–494 the chain is Extracellular; it reads TARTLENKQFEDY. Residues 495–517 form a helical membrane-spanning segment; it reads GMDVLTVAFLGILVTAPIGALVI. Over 518-539 the chain is Cytoplasmic; it reads GLTGPKMLEKSESRTVTEEGSV.

It belongs to the monovalent cation:proton antiporter 1 (CPA1) transporter (TC 2.A.36) family. As to quaternary structure, homodimer; dimerization is essential for SLC9B2 activity. Lipids seem to play a role in the stabilization of the dimerization subdomain.

The protein resides in the cell membrane. It localises to the mitochondrion membrane. It is found in the endosome membrane. The protein localises to the recycling endosome membrane. Its subcellular location is the cytoplasmic vesicle. The protein resides in the secretory vesicle. It localises to the synaptic vesicle membrane. It is found in the basolateral cell membrane. The protein localises to the apical cell membrane. The enzyme catalyses Li(+)(out) + H(+)(in) = Li(+)(in) + H(+)(out). The catalysed reaction is Li(+)(in) + Na(+)(out) = Li(+)(out) + Na(+)(in). It carries out the reaction Na(+)(in) + H(+)(out) = Na(+)(out) + H(+)(in). Allosterically inhibited by the N-terminal domain. Inhibited by phloretin. Electroneutral Na(+) Li(+)/H(+) antiporter that extrudes Na(+) or Li(+) in exchange for external protons across the membrane. Uses the proton gradient/membrane potential to extrude sodium. Contributes to the regulation of intracellular pH and sodium homeostasis. Also able to mediate Na(+)/Li(+) antiporter activity in kidney. The polypeptide is Sodium/hydrogen exchanger 9B2 (slc9b2) (Xenopus tropicalis (Western clawed frog)).